The primary structure comprises 230 residues: Fibrillarin-like rRNA/tRNA 2'-O-methyltransferase (230 aa).

S-adenosyl-L-methionine-binding positions include threonine 89–threonine 90, glutamate 107–valine 108, aspartate 132–alanine 133, and aspartate 152–glutamine 155.

This sequence belongs to the methyltransferase superfamily. Fibrillarin family. In terms of assembly, interacts with nop5. Component of box C/D small ribonucleoprotein (sRNP) particles that contain rpl7ae, FlpA and nop5, plus a guide RNA.

In terms of biological role, involved in pre-rRNA and tRNA processing. Utilizes the methyl donor S-adenosyl-L-methionine to catalyze the site-specific 2'-hydroxyl methylation of ribose moieties in rRNA and tRNA. Site specificity is provided by a guide RNA that base pairs with the substrate. Methylation occurs at a characteristic distance from the sequence involved in base pairing with the guide RNA. In Thermoplasma acidophilum (strain ATCC 25905 / DSM 1728 / JCM 9062 / NBRC 15155 / AMRC-C165), this protein is Fibrillarin-like rRNA/tRNA 2'-O-methyltransferase.